Here is a 376-residue protein sequence, read N- to C-terminus: uncharacterized protein (376 aa).

2 helical membrane-spanning segments follow: residues 153 to 173 (QGTL…VLFA) and 188 to 208 (HRPF…LAVY).

It localises to the membrane. This is an uncharacterized protein from Saccharomyces cerevisiae (strain ATCC 204508 / S288c) (Baker's yeast).